The sequence spans 225 residues: Reticulon-like protein B9 (225 aa).

Residues 39–224 (VADILLWREP…PRGTVKNKKF (186 aa)) form the Reticulon domain. The next 3 membrane-spanning stretches (helical) occupy residues 50-70 (IAAT…VVEY), 72-92 (FITL…IWST), and 152-172 (YIVS…IGFV).

It is found in the endoplasmic reticulum membrane. This chain is Reticulon-like protein B9 (RTNLB9), found in Arabidopsis thaliana (Mouse-ear cress).